Here is a 425-residue protein sequence, read N- to C-terminus: Ribosome biogenesis protein WDR12 homolog (425 aa).

A ubiquitin-like (UBL) domain region spans residues 7–93; it reads IQAKFFTKDE…ETIVHLEYLE (87 aa). WD repeat units lie at residues 105–142, 145–187, 194–233, 265–303, 305–344, 350–390, and 394–425; these read IHDDWVSAVHASEAGILSGCYDNTLHIWDTATGTRRLT, GHLG…NAVE, GHARSVDCVDVSWNGAKFVTGSFDHMLKVWSADPDSTDTD, GHHEAVTGVQWTDEGEVATCSMDHTLRIWDVELGGMKSQ, AGSKAFLGISYSRLNRQIVSASSDRHVRLWDPRTKDGTIV, SHAG…APLY, and GHEDKVLAVDWSLGKYMISGGADNQLKIFEHK. A disordered region spans residues 227-253; the sequence is PDSTDTDHGQDGSEEGSRKKQKTVDGK. Basic and acidic residues predominate over residues 231–253; that stretch reads DTDHGQDGSEEGSRKKQKTVDGK.

Belongs to the WD repeat WDR12/YTM1 family.

Its subcellular location is the nucleus. The protein resides in the nucleolus. The protein localises to the nucleoplasm. In terms of biological role, required for maturation of ribosomal RNAs and formation of the large ribosomal subunit. This is Ribosome biogenesis protein WDR12 homolog from Ixodes scapularis (Black-legged tick).